The primary structure comprises 137 residues: Ribosome-binding factor A (137 aa).

Positions Gln-114–Glu-137 are disordered. A compositionally biased stretch (basic and acidic residues) spans Asp-117–Arg-127. Over residues Pro-128 to Glu-137 the composition is skewed to acidic residues.

It belongs to the RbfA family. In terms of assembly, monomer. Binds 30S ribosomal subunits, but not 50S ribosomal subunits or 70S ribosomes.

Its subcellular location is the cytoplasm. In terms of biological role, one of several proteins that assist in the late maturation steps of the functional core of the 30S ribosomal subunit. Associates with free 30S ribosomal subunits (but not with 30S subunits that are part of 70S ribosomes or polysomes). Required for efficient processing of 16S rRNA. May interact with the 5'-terminal helix region of 16S rRNA. The polypeptide is Ribosome-binding factor A (Alcanivorax borkumensis (strain ATCC 700651 / DSM 11573 / NCIMB 13689 / SK2)).